Reading from the N-terminus, the 291-residue chain is ATP synthase gamma chain (291 aa).

This sequence belongs to the ATPase gamma chain family. F-type ATPases have 2 components, CF(1) - the catalytic core - and CF(0) - the membrane proton channel. CF(1) has five subunits: alpha(3), beta(3), gamma(1), delta(1), epsilon(1). CF(0) has three main subunits: a, b and c.

The protein localises to the cell inner membrane. In terms of biological role, produces ATP from ADP in the presence of a proton gradient across the membrane. The gamma chain is believed to be important in regulating ATPase activity and the flow of protons through the CF(0) complex. The chain is ATP synthase gamma chain from Burkholderia cenocepacia (strain ATCC BAA-245 / DSM 16553 / LMG 16656 / NCTC 13227 / J2315 / CF5610) (Burkholderia cepacia (strain J2315)).